Reading from the N-terminus, the 592-residue chain is MRQFTHGTLLAILALANTISAIPSFSANNYPAHPAEPLALFAQSQPQAPLGLWTRLRNSVIERLWGVPPQQRNHRGGNKQYPFYSAPASLQARYSDDVVLRFRLQTADEVKALVEASNILFLDVWASTDEWVDIRLAKDVVPSLLGLLPKSLQTAHVPLIHDLPQTVYESYPSSSQRPTDNGRGFLPSRESSSDVTNIFFEDYQPLSVIGPWMRLLASMFPSHVQLISIGSSFEGRDIPALRVGVRPANDPKPRKTVIIGGGSHAREWIGVSTVNYVAYSLITTYGKSTPISTLLEQFDFIFIPTINPDGYVHTWETDRLWRKNRQETSLPFCPGVDLDRTWGFEWNGNATGDNPCSESYGGDEPFAGTEARQLAGWVKEQTEQHNVKFIAYLDLHSYSQQVLYPYSYSCLPRPPNLENLEELAMGIAKAIRLTNRQSYTVSSACQGFTASQKKVKLDTFPRMESAGGSALDWFYNDVGVKYSYQLKLRDKGSYGFLLPRENIVPTGKEVFNAVMVLGKFLLGSDGFEGLNWEAEFQRLNEADKPILDDGDDDEEEDGQDKNDDSWIPDEYKNDNDHDDDDDGWGLRRRRKR.

The first 21 residues, 1–21 (MRQFTHGTLLAILALANTISA), serve as a signal peptide directing secretion. Residues 22–174 (IPSFSANNYP…QTVYESYPSS (153 aa)) constitute a propeptide that is removed on maturation. Residues 170-179 (SYPSSSQRPT) are compositionally biased toward polar residues. Residues 170–191 (SYPSSSQRPTDNGRGFLPSRES) form a disordered region. The Peptidase M14 domain maps to 202–521 (DYQPLSVIGP…NAVMVLGKFL (320 aa)). Positions 264 and 267 each coordinate Zn(2+). Residues 264–267 (HARE), arginine 322, and 339–340 (DR) contribute to the substrate site. Cysteines 333 and 356 form a disulfide. Residue asparagine 349 is glycosylated (N-linked (GlcNAc...) asparagine). Histidine 396 is a Zn(2+) binding site. 397–398 (SY) contacts substrate. Residues 542–592 (ADKPILDDGDDDEEEDGQDKNDDSWIPDEYKNDNDHDDDDDGWGLRRRRKR) form a disordered region. The segment covering 548–558 (DDGDDDEEEDG) has biased composition (acidic residues). Basic and acidic residues predominate over residues 559-575 (QDKNDDSWIPDEYKNDN).

This sequence belongs to the peptidase M14 family. Zn(2+) serves as cofactor.

It is found in the vacuole. The protein resides in the secreted. In terms of biological role, inactive carboxypeptidase that may play a role in cell wall organization and biogenesis. The chain is Inactive metallocarboxypeptidase ECM14 (ECM14) from Blastomyces gilchristii (strain SLH14081) (Blastomyces dermatitidis).